The chain runs to 51 residues: MFDDLPPLSHQEQQRAVEEIQKLMAEGMSTAQAIKIIAEKIRAEHKAQSAE.

Belongs to the UPF0181 family.

The chain is UPF0181 protein VVA0806 from Vibrio vulnificus (strain YJ016).